Reading from the N-terminus, the 407-residue chain is Transcriptional regulator UL34 (407 aa).

A disordered region spans residues 268–330; it reads AAGPPEADEN…ENEEEEEELF (63 aa). A compositionally biased stretch (acidic residues) spans 273 to 286; that stretch reads EADENNDEGEEDDD. A compositionally biased stretch (basic and acidic residues) spans 287 to 301; the sequence is ELRHSDPAPLHDSKK. Basic residues predominate over residues 302 to 312; sequence PRNARRPRTRV.

The protein belongs to the HHV-5 UL34 protein family.

The protein localises to the host nucleus. Functionally, acts as a transcriptional repressor of the US3 gene expression through a specific DNA sequence named the transcriptional repressive element (tre). The sequence is that of Transcriptional regulator UL34 (UL34) from Homo sapiens (Human).